Reading from the N-terminus, the 597-residue chain is Proteasome-associated ATPase (597 aa).

Over residues 1-12 (MQHDRPGSRPEE) the composition is skewed to basic and acidic residues. The tract at residues 1-22 (MQHDRPGSRPEEGGEQQIGGDA) is disordered. Residues 21 to 97 (DAELNSQIRL…REEVDRLAQP (77 aa)) are a coiled coil. 284–289 (GCGKTL) is an ATP binding site. The tract at residues 596-597 (YL) is docks into pockets in the proteasome alpha-ring.

This sequence belongs to the AAA ATPase family. As to quaternary structure, homohexamer. Assembles into a hexameric ring structure that caps the 20S proteasome core. Strongly interacts with the prokaryotic ubiquitin-like protein Pup through a hydrophobic interface; the interacting region of ARC lies in its N-terminal coiled-coil domain. There is one Pup binding site per ARC hexamer ring. Upon ATP-binding, the C-terminus of ARC interacts with the alpha-rings of the proteasome core, possibly by binding to the intersubunit pockets.

Its pathway is protein degradation; proteasomal Pup-dependent pathway. Functionally, ATPase which is responsible for recognizing, binding, unfolding and translocation of pupylated proteins into the bacterial 20S proteasome core particle. May be essential for opening the gate of the 20S proteasome via an interaction with its C-terminus, thereby allowing substrate entry and access to the site of proteolysis. Thus, the C-termini of the proteasomal ATPase may function like a 'key in a lock' to induce gate opening and therefore regulate proteolysis. The polypeptide is Proteasome-associated ATPase (Saccharopolyspora erythraea (strain ATCC 11635 / DSM 40517 / JCM 4748 / NBRC 13426 / NCIMB 8594 / NRRL 2338)).